The primary structure comprises 250 residues: MGNLRVDVITLFPEMFSAITEYGITSRAVKQGLLQVTCWNPRDYTTDRHHTVDDRPFGGGPGMVMKIKPLEDALVSARQATGAAAKVIYLSPQGRKLTQQAVKGLAEQESLILIAGRYEGIDERFIEAHVDEEWSIGDYVLSGGELPAMVLIDAVTRLLPGALGHVDSAEEDSFTDGLLDCPHYTRPEVYADQRVPDVLLSGNHAHIRRWRMKQSLGRTFERRADLLESRSLSGEEKKLLEEYLRERDDS.

Residues Gly-116 and 136–141 (IGDYVL) each bind S-adenosyl-L-methionine.

This sequence belongs to the RNA methyltransferase TrmD family. In terms of assembly, homodimer.

The protein localises to the cytoplasm. The catalysed reaction is guanosine(37) in tRNA + S-adenosyl-L-methionine = N(1)-methylguanosine(37) in tRNA + S-adenosyl-L-homocysteine + H(+). Specifically methylates guanosine-37 in various tRNAs. The sequence is that of tRNA (guanine-N(1)-)-methyltransferase from Pseudomonas putida (strain ATCC 47054 / DSM 6125 / CFBP 8728 / NCIMB 11950 / KT2440).